Reading from the N-terminus, the 718-residue chain is Adhesin-like cell surface protein MAD1 (718 aa).

Residues 1–19 form the signal peptide; it reads MKGAIQFLGALAAVQAVSA. 9 tandem repeats follow at residues 217-243, 244-265, 266-282, 283-309, 310-336, 337-358, 359-382, 383-402, and 403-420. The disordered stretch occupies residues 452–472; the sequence is TSIPYETPSPSETETLPPSGT. Residues 462–575 enclose the CFEM domain; that stretch reads SETETLPPSG…VTLPPVTTGA (114 aa). 3 disulfides stabilise this stretch: Cys-494/Cys-526, Cys-504/Cys-512, and Cys-514/Cys-548. Residue Asp-509 coordinates heme. A lipid anchor (GPI-anchor amidated glycine) is attached at Gly-693. Positions 694–718 are cleaved as a propeptide — removed in mature form; the sequence is AASSFKAFSTVMLAGVIGLTALIMA.

The protein belongs to the RBT5 family. In terms of processing, the GPI-anchor is attached to the protein in the endoplasmic reticulum and serves to target the protein to the cell surface. There, the glucosamine-inositol phospholipid moiety is cleaved off and the GPI-modified mannoprotein is covalently attached via its lipidless GPI glycan remnant to the 1,6-beta-glucan of the outer cell wall layer.

Its subcellular location is the secreted. The protein resides in the cell wall. It is found in the cell membrane. In terms of biological role, cell surface adhesion protein that plays a key role in switching between the saprophytic lifestyle and the predacious lifestyle (nematode trapping). Likely functions to prevent energy-consuming trap formation in the absence of nematodes, and keeps the fungus in the saprophytic life style. May influence the induction signal of trap formation by limiting the porosity of the cell wall and thus affecting its permeability of nitrogen source. The polypeptide is Adhesin-like cell surface protein MAD1 (Arthrobotrys oligospora (strain ATCC 24927 / CBS 115.81 / DSM 1491) (Nematode-trapping fungus)).